A 293-amino-acid polypeptide reads, in one-letter code: Ribosomal protein L11 methyltransferase (293 aa).

S-adenosyl-L-methionine is bound by residues Thr145, Gly166, Asp188, and Asn230.

It belongs to the methyltransferase superfamily. PrmA family.

The protein resides in the cytoplasm. It carries out the reaction L-lysyl-[protein] + 3 S-adenosyl-L-methionine = N(6),N(6),N(6)-trimethyl-L-lysyl-[protein] + 3 S-adenosyl-L-homocysteine + 3 H(+). Its function is as follows. Methylates ribosomal protein L11. The chain is Ribosomal protein L11 methyltransferase from Escherichia coli O8 (strain IAI1).